A 582-amino-acid chain; its full sequence is UPF0329 protein ECU07_0070 (582 aa).

The disordered stretch occupies residues 326–386 (EEKAKSKKKG…KTGKKSKGDQ (61 aa)). A compositionally biased stretch (basic residues) spans 330–339 (KSKKKGKKKS). Positions 344 to 354 (EAKEEEKKESG) are enriched in basic and acidic residues.

Belongs to the UPF0329 family.

The chain is UPF0329 protein ECU07_0070 from Encephalitozoon cuniculi (strain GB-M1) (Microsporidian parasite).